Consider the following 522-residue polypeptide: Protein nucleotidyltransferase YdiU (522 aa).

Gly109, Gly111, Arg112, Lys132, Asp144, Gly145, Arg195, and Arg202 together coordinate ATP. The active-site Proton acceptor is the Asp271. Asn272 and Asp281 together coordinate Mg(2+). ATP is bound at residue Asp281.

The protein belongs to the SELO family. Mg(2+) serves as cofactor. Mn(2+) is required as a cofactor.

The catalysed reaction is L-seryl-[protein] + ATP = 3-O-(5'-adenylyl)-L-seryl-[protein] + diphosphate. The enzyme catalyses L-threonyl-[protein] + ATP = 3-O-(5'-adenylyl)-L-threonyl-[protein] + diphosphate. It carries out the reaction L-tyrosyl-[protein] + ATP = O-(5'-adenylyl)-L-tyrosyl-[protein] + diphosphate. It catalyses the reaction L-histidyl-[protein] + UTP = N(tele)-(5'-uridylyl)-L-histidyl-[protein] + diphosphate. The catalysed reaction is L-seryl-[protein] + UTP = O-(5'-uridylyl)-L-seryl-[protein] + diphosphate. The enzyme catalyses L-tyrosyl-[protein] + UTP = O-(5'-uridylyl)-L-tyrosyl-[protein] + diphosphate. Nucleotidyltransferase involved in the post-translational modification of proteins. It can catalyze the addition of adenosine monophosphate (AMP) or uridine monophosphate (UMP) to a protein, resulting in modifications known as AMPylation and UMPylation. The sequence is that of Protein nucleotidyltransferase YdiU from Burkholderia cenocepacia (strain HI2424).